The chain runs to 387 residues: DNA primase small subunit PriS (387 aa).

Catalysis depends on residues D98, D100, and D289.

Belongs to the eukaryotic-type primase small subunit family. As to quaternary structure, heterodimer of a small subunit (PriS) and a large subunit (PriL). Mg(2+) is required as a cofactor. The cofactor is Mn(2+).

Catalytic subunit of DNA primase, an RNA polymerase that catalyzes the synthesis of short RNA molecules used as primers for DNA polymerase during DNA replication. The small subunit contains the primase catalytic core and has DNA synthesis activity on its own. Binding to the large subunit stabilizes and modulates the activity, increasing the rate of DNA synthesis while decreasing the length of the DNA fragments, and conferring RNA synthesis capability. The DNA polymerase activity may enable DNA primase to also catalyze primer extension after primer synthesis. May also play a role in DNA repair. In Halorubrum lacusprofundi (strain ATCC 49239 / DSM 5036 / JCM 8891 / ACAM 34), this protein is DNA primase small subunit PriS.